The sequence spans 423 residues: Histidine--tRNA ligase (423 aa).

The protein belongs to the class-II aminoacyl-tRNA synthetase family. In terms of assembly, homodimer.

Its subcellular location is the cytoplasm. It catalyses the reaction tRNA(His) + L-histidine + ATP = L-histidyl-tRNA(His) + AMP + diphosphate + H(+). This chain is Histidine--tRNA ligase (hisS), found in Mycobacterium bovis (strain ATCC BAA-935 / AF2122/97).